Here is a 277-residue protein sequence, read N- to C-terminus: Glutamate racemase (277 aa).

Residues 13 to 14 (DS) and 45 to 46 (YG) each bind substrate. The active-site Proton donor/acceptor is cysteine 77. Substrate is bound at residue 78-79 (NT). Cysteine 192 acts as the Proton donor/acceptor in catalysis. 193–194 (TH) contacts substrate.

This sequence belongs to the aspartate/glutamate racemases family.

It carries out the reaction L-glutamate = D-glutamate. The protein operates within cell wall biogenesis; peptidoglycan biosynthesis. In terms of biological role, provides the (R)-glutamate required for cell wall biosynthesis. The chain is Glutamate racemase from Rhizobium meliloti (strain 1021) (Ensifer meliloti).